Here is a 270-residue protein sequence, read N- to C-terminus: uncharacterized protein (270 aa).

Positions 1-22 (MGYIKRMALYMSVFLLIIFIVG) are cleaved as a signal peptide. C23 is lipidated: N-palmitoyl cysteine. C23 is lipidated: S-diacylglycerol cysteine.

It belongs to the staphylococcal tandem lipoprotein family.

The protein localises to the cell membrane. This is an uncharacterized protein from Staphylococcus aureus (strain COL).